The chain runs to 270 residues: MLTRRIIPCLDVKAGRVVKGVKFLNHRDAGDPVALAAAYNAAGADELVFYDITASSDERAIMVEVVERTAAEVFIPLTVGGGLRSVEDMYRMLRAGADKVSLNTAAVYNPHLIAEGARRFGSQCIVLSVDAKRVNAPGEPPRWEVFTHTGANPRPTGLDAIEWIKRGIDLGAGEICINSMDADGARTGYDLELLQAITAISPVPVIASGGAGSPADMYRGIVEGGADAVLAASIFHFGDYSIADVKRYLAERGVPVRQTFGSEVGTSTGA.

Catalysis depends on residues Asp-11 and Asp-130.

It belongs to the HisA/HisF family. Heterodimer of HisH and HisF.

The protein resides in the cytoplasm. The catalysed reaction is 5-[(5-phospho-1-deoxy-D-ribulos-1-ylimino)methylamino]-1-(5-phospho-beta-D-ribosyl)imidazole-4-carboxamide + L-glutamine = D-erythro-1-(imidazol-4-yl)glycerol 3-phosphate + 5-amino-1-(5-phospho-beta-D-ribosyl)imidazole-4-carboxamide + L-glutamate + H(+). Its pathway is amino-acid biosynthesis; L-histidine biosynthesis; L-histidine from 5-phospho-alpha-D-ribose 1-diphosphate: step 5/9. IGPS catalyzes the conversion of PRFAR and glutamine to IGP, AICAR and glutamate. The HisF subunit catalyzes the cyclization activity that produces IGP and AICAR from PRFAR using the ammonia provided by the HisH subunit. This chain is Imidazole glycerol phosphate synthase subunit HisF, found in Chloroflexus aggregans (strain MD-66 / DSM 9485).